A 205-amino-acid chain; its full sequence is Probable GTP-binding protein EngB (205 aa).

An EngB-type G domain is found at 8–195; that stretch reads RDAEVVLIGR…NEAVRHHLHE (188 aa). GTP contacts are provided by residues 16 to 23, 41 to 45, 60 to 63, 140 to 143, and 175 to 177; these read GRSNVGKS, GVTRS, DLPG, NKMD, and ISA. Mg(2+) is bound by residues Ser23 and Thr43.

The protein belongs to the TRAFAC class TrmE-Era-EngA-EngB-Septin-like GTPase superfamily. EngB GTPase family. Requires Mg(2+) as cofactor.

Its function is as follows. Necessary for normal cell division and for the maintenance of normal septation. The chain is Probable GTP-binding protein EngB from Haloarcula marismortui (strain ATCC 43049 / DSM 3752 / JCM 8966 / VKM B-1809) (Halobacterium marismortui).